We begin with the raw amino-acid sequence, 198 residues long: Protein GrpE (198 aa).

Belongs to the GrpE family. Homodimer.

It localises to the cytoplasm. In terms of biological role, participates actively in the response to hyperosmotic and heat shock by preventing the aggregation of stress-denatured proteins, in association with DnaK and GrpE. It is the nucleotide exchange factor for DnaK and may function as a thermosensor. Unfolded proteins bind initially to DnaJ; upon interaction with the DnaJ-bound protein, DnaK hydrolyzes its bound ATP, resulting in the formation of a stable complex. GrpE releases ADP from DnaK; ATP binding to DnaK triggers the release of the substrate protein, thus completing the reaction cycle. Several rounds of ATP-dependent interactions between DnaJ, DnaK and GrpE are required for fully efficient folding. The chain is Protein GrpE from Lysinibacillus sphaericus (Bacillus sphaericus).